A 91-amino-acid polypeptide reads, in one-letter code: MSRKKPNILEHELVPKHEVLSVREAAELLRKLKIKPAQLPWISIDDPVVKAIKAKPGDIIRIIRKSPTAGEAIAYRYVVVDTLRPRKKEKV.

This sequence belongs to the archaeal Rpo5/eukaryotic RPB5 RNA polymerase subunit family. Part of the RNA polymerase complex.

It is found in the cytoplasm. It catalyses the reaction RNA(n) + a ribonucleoside 5'-triphosphate = RNA(n+1) + diphosphate. Its function is as follows. DNA-dependent RNA polymerase (RNAP) catalyzes the transcription of DNA into RNA using the four ribonucleoside triphosphates as substrates. The sequence is that of DNA-directed RNA polymerase subunit Rpo5 from Staphylothermus marinus (strain ATCC 43588 / DSM 3639 / JCM 9404 / F1).